The chain runs to 257 residues: Ribonuclease HII (257 aa).

The RNase H type-2 domain maps to 70-257 (EFIAGIDEVG…PIKSMVAGGN (188 aa)). A divalent metal cation-binding residues include aspartate 76, glutamate 77, and aspartate 168.

The protein belongs to the RNase HII family. It depends on Mn(2+) as a cofactor. Mg(2+) serves as cofactor.

The protein localises to the cytoplasm. It carries out the reaction Endonucleolytic cleavage to 5'-phosphomonoester.. Its function is as follows. Endonuclease that specifically degrades the RNA of RNA-DNA hybrids. This is Ribonuclease HII from Streptococcus suis (strain 98HAH33).